The primary structure comprises 1067 residues: Receptor-type guanylate cyclase gcy-10 (1067 aa).

The signal sequence occupies residues 1–20; it reads MLKSLLIIVIVFLHRELCDG. Over 21–438 the chain is Extracellular; that stretch reads IQLILFDNWP…CVAKSSCVNY (418 aa). Asparagine 411 carries N-linked (GlcNAc...) asparagine glycosylation. The helical transmembrane segment at 439–459 threads the bilayer; it reads IPHIIAAVVIVTIIVIAIVII. Residues 460–1067 lie on the Cytoplasmic side of the membrane; sequence VKQRRHKLNI…RGSIVPLQKA (608 aa). The 283-residue stretch at 509 to 791 folds into the Protein kinase domain; sequence ALTSRRRVFG…ESISTVYPLS (283 aa). ATP-binding positions include 515 to 523 and lysine 534; that span reads RVFGSYALV. Positions 859 to 989 constitute a Guanylate cyclase domain; it reads TVMFVQICDF…DTVNFASRMQ (131 aa).

The protein belongs to the adenylyl cyclase class-4/guanylyl cyclase family. As to expression, expressed predominantly in AWC but also in AWB, ASI, ASJ and ASK sensory neurons and in I1 interneuron.

It is found in the cell membrane. The protein resides in the cell projection. Its subcellular location is the cilium. The catalysed reaction is GTP = 3',5'-cyclic GMP + diphosphate. Guanylate cyclase involved in the production of the second messenger cGMP. Regulates chemotaxis responses toward volatile odorants in AWC sensory neurons and their avoidance in AWB sensory neurons. May be involved in sensitivity to quinine by regulating egl-4 activity through the production of cGMP. Involved in phototransduction in ASJ neurons downstream of G protein coupled-photoreceptor lite-1. Required to maintain the expression of putative olfactory receptor str-2 in AWC neurons in adults. In AWB and AWC sensory neurons, mediates the recognition of food oders which subsequently allows for the detection of preferred food sources. Involved in AWB sensory neuron development and extension during postembryonic development, potentially via mediating localization of tub-1 and PI(4,5)P2 to membrane cilia. This chain is Receptor-type guanylate cyclase gcy-10, found in Caenorhabditis elegans.